The following is a 275-amino-acid chain: ATP synthase subunit delta (275 aa).

The protein belongs to the ATPase delta chain family. As to quaternary structure, F-type ATPases have 2 components, F(1) - the catalytic core - and F(0) - the membrane proton channel. F(1) has five subunits: alpha(3), beta(3), gamma(1), delta(1), epsilon(1). F(0) has three main subunits: a(1), b(2) and c(10-14). The alpha and beta chains form an alternating ring which encloses part of the gamma chain. F(1) is attached to F(0) by a central stalk formed by the gamma and epsilon chains, while a peripheral stalk is formed by the delta and b chains.

It is found in the cell membrane. In terms of biological role, f(1)F(0) ATP synthase produces ATP from ADP in the presence of a proton or sodium gradient. F-type ATPases consist of two structural domains, F(1) containing the extramembraneous catalytic core and F(0) containing the membrane proton channel, linked together by a central stalk and a peripheral stalk. During catalysis, ATP synthesis in the catalytic domain of F(1) is coupled via a rotary mechanism of the central stalk subunits to proton translocation. This protein is part of the stalk that links CF(0) to CF(1). It either transmits conformational changes from CF(0) to CF(1) or is implicated in proton conduction. The sequence is that of ATP synthase subunit delta from Arthrobacter sp. (strain FB24).